A 772-amino-acid polypeptide reads, in one-letter code: Ion-translocating oxidoreductase complex subunit C (772 aa).

2 consecutive 4Fe-4S ferredoxin-type domains span residues 369 to 397 (GEPQ…QQLY) and 407 to 436 (KATT…VQYF). Residues cysteine 377, cysteine 380, cysteine 383, cysteine 387, cysteine 416, cysteine 419, cysteine 422, and cysteine 426 each contribute to the [4Fe-4S] cluster site. Disordered regions lie at residues 602–684 (KLEQ…DPRK), 696–717 (ARKL…PRKA), and 727–746 (KARK…QVDP). Positions 605–615 (QQQANAEPEQQ) are enriched in low complexity.

This sequence belongs to the 4Fe4S bacterial-type ferredoxin family. RnfC subfamily. As to quaternary structure, the complex is composed of six subunits: RsxA, RsxB, RsxC, RsxD, RsxE and RsxG. Requires [4Fe-4S] cluster as cofactor.

It localises to the cell inner membrane. Part of a membrane-bound complex that couples electron transfer with translocation of ions across the membrane. Required to maintain the reduced state of SoxR. This is Ion-translocating oxidoreductase complex subunit C from Escherichia coli O157:H7 (strain EC4115 / EHEC).